We begin with the raw amino-acid sequence, 675 residues long: DNA ligase (675 aa).

Residues 36-40 (DAAYD), 85-86 (SL), and E117 each bind NAD(+). The active-site N6-AMP-lysine intermediate is the K119. 4 residues coordinate NAD(+): R140, E177, K294, and K318. Positions 412, 415, 430, and 436 each coordinate Zn(2+). Residues 597-675 (AEDLPLSGNT…EAEFLELIGE (79 aa)) enclose the BRCT domain.

Belongs to the NAD-dependent DNA ligase family. LigA subfamily. Requires Mg(2+) as cofactor. Mn(2+) serves as cofactor.

The enzyme catalyses NAD(+) + (deoxyribonucleotide)n-3'-hydroxyl + 5'-phospho-(deoxyribonucleotide)m = (deoxyribonucleotide)n+m + AMP + beta-nicotinamide D-nucleotide.. Functionally, DNA ligase that catalyzes the formation of phosphodiester linkages between 5'-phosphoryl and 3'-hydroxyl groups in double-stranded DNA using NAD as a coenzyme and as the energy source for the reaction. It is essential for DNA replication and repair of damaged DNA. This chain is DNA ligase, found in Thioalkalivibrio sulfidiphilus (strain HL-EbGR7).